The sequence spans 413 residues: Protein cycle (413 aa).

Positions 1-43 (MEVQEFCENMEEIEDENYDEEKSARTSDENRKQNHSEIEKRRR) are disordered. The span at 8–19 (ENMEEIEDENYD) shows a compositional bias: acidic residues. Positions 20-41 (EEKSARTSDENRKQNHSEIEKR) are enriched in basic and acidic residues. One can recognise a bHLH domain in the interval 30-83 (NRKQNHSEIEKRRRDKMNTYINELSSMIPMCFAMQRKLDKLTVLRMAVQHLRGI). The 72-residue stretch at 104–175 (DQELKMIILQ…EQLSSLEQCP (72 aa)) folds into the PAS 1 domain. The disordered stretch occupies residues 219–242 (NQIKEESDTSSSSRSSTKRKSRLT). One can recognise a PAS 2 domain in the interval 297–367 (PASLDNHPNI…ESHKMVMQVP (71 aa)). In terms of domain architecture, PAC spans 372–413 (TQVYRFRCKDNSYIQLQSEWRAFKNPWTSEIDYIIAKNSVFL).

In terms of assembly, efficient DNA binding requires dimerization with another bHLH protein. Forms a heterodimer with Clock in order to activate PER and TIM transcription. In terms of tissue distribution, expressed in head and ovary.

The protein localises to the nucleus. In terms of biological role, putative transcription factor involved in the generation of biological rhythms. Activates cycling transcription of Period (PER) and Timeless (TIM) by binding to the E-box (5'-CACGTG-3') present in their promoters. The polypeptide is Protein cycle (cyc) (Drosophila melanogaster (Fruit fly)).